A 270-amino-acid chain; its full sequence is ATP synthase subunit a (270 aa).

The next 5 membrane-spanning stretches (helical) occupy residues 37–57 (NVHI…LGVF), 98–118 (IAPL…MDLV), 143–163 (DVNI…YYSI), 208–228 (LFGN…MLPW), and 239–259 (AIFH…LTIV).

The protein belongs to the ATPase A chain family. In terms of assembly, F-type ATPases have 2 components, CF(1) - the catalytic core - and CF(0) - the membrane proton channel. CF(1) has five subunits: alpha(3), beta(3), gamma(1), delta(1), epsilon(1). CF(0) has three main subunits: a(1), b(2) and c(9-12). The alpha and beta chains form an alternating ring which encloses part of the gamma chain. CF(1) is attached to CF(0) by a central stalk formed by the gamma and epsilon chains, while a peripheral stalk is formed by the delta and b chains.

Its subcellular location is the cell inner membrane. Its function is as follows. Key component of the proton channel; it plays a direct role in the translocation of protons across the membrane. This chain is ATP synthase subunit a, found in Vibrio cholerae serotype O1 (strain ATCC 39315 / El Tor Inaba N16961).